A 415-amino-acid polypeptide reads, in one-letter code: Diaminopimelate decarboxylase (415 aa).

An N6-(pyridoxal phosphate)lysine modification is found at Lys-54. Pyridoxal 5'-phosphate-binding positions include Gly-223 and 264 to 267 (EPGR). Residues Arg-267, Arg-303, and Tyr-307 each contribute to the substrate site. The Proton donor role is filled by Cys-338. Substrate contacts are provided by Glu-339 and Tyr-374. Tyr-374 is a pyridoxal 5'-phosphate binding site.

The protein belongs to the Orn/Lys/Arg decarboxylase class-II family. LysA subfamily. Homodimer. Requires pyridoxal 5'-phosphate as cofactor.

It catalyses the reaction meso-2,6-diaminopimelate + H(+) = L-lysine + CO2. It participates in amino-acid biosynthesis; L-lysine biosynthesis via DAP pathway; L-lysine from DL-2,6-diaminopimelate: step 1/1. In terms of biological role, specifically catalyzes the decarboxylation of meso-diaminopimelate (meso-DAP) to L-lysine. In Buchnera aphidicola subsp. Schizaphis graminum (strain Sg), this protein is Diaminopimelate decarboxylase.